The sequence spans 407 residues: V-set and immunoglobulin domain-containing protein 1 (407 aa).

Positions 1–22 are cleaved as a signal peptide; that stretch reads MMVFAFWKVFLILNCLAGQVSM. Residues 23 to 134 enclose the Ig-like V-type domain; sequence VQVTIPDTFV…HFVGKNQGLL (112 aa). At 23 to 234 the chain is on the extracellular side; the sequence is VQVTIPDTFV…EIDLTSSHPE (212 aa). An N-linked (GlcNAc...) asparagine glycan is attached at asparagine 39. 2 cysteine pairs are disulfide-bonded: cysteine 44-cysteine 118 and cysteine 163-cysteine 213. Residues 145–229 enclose the Ig-like C2-type domain; the sequence is PFCTIQGRPE…GNSSCEIDLT (85 aa). N-linked (GlcNAc...) asparagine glycans are attached at residues asparagine 202 and asparagine 221. The chain crosses the membrane as a helical span at residues 235–255; the sequence is VGIIIGALVGALIGAAVIICV. Topologically, residues 256–407 are cytoplasmic; the sequence is VYFARNKVKS…SKAGEDTVKA (152 aa). 2 disordered regions span residues 268–289 and 318–407; these read QKNLNSSTELEPMTKVHHPQQS and TAVL…TVKA. Phosphoserine is present on residues serine 273 and serine 274. Residues 361–371 are compositionally biased toward acidic residues; the sequence is DPETETEPEPE.

The protein localises to the membrane. This is V-set and immunoglobulin domain-containing protein 1 (Vsig1) from Mus musculus (Mouse).